A 104-amino-acid polypeptide reads, in one-letter code: Protein S100-A14 (104 aa).

The region spanning 27 to 61 is the EF-hand domain; that stretch reads KNFHQYSVEGGKETLTPSELRDLVTQQLPHLMPSN.

Belongs to the S-100 family. Homodimer. Interacts with AGER.

The protein localises to the cytoplasm. Modulates P53/TP53 protein levels, and thereby plays a role in the regulation of cell survival and apoptosis. Depending on the context, it can promote cell proliferation or apoptosis. Plays a role in the regulation of cell migration by modulating the levels of MMP2, a matrix protease that is under transcriptional control of P53/TP53. Does not bind calcium. The sequence is that of Protein S100-A14 (S100A14) from Bos taurus (Bovine).